Consider the following 220-residue polypeptide: Small ribosomal subunit protein uS3 (220 aa).

Positions 38–106 (IRNFINKKLQ…QVHINIVEIK (69 aa)) constitute a KH type-2 domain.

Belongs to the universal ribosomal protein uS3 family. As to quaternary structure, part of the 30S ribosomal subunit. Forms a tight complex with proteins S10 and S14.

Binds the lower part of the 30S subunit head. Binds mRNA in the 70S ribosome, positioning it for translation. The protein is Small ribosomal subunit protein uS3 of Lacticaseibacillus paracasei (strain ATCC 334 / BCRC 17002 / CCUG 31169 / CIP 107868 / KCTC 3260 / NRRL B-441) (Lactobacillus paracasei).